Reading from the N-terminus, the 234-residue chain is tRNA (guanine-N(1)-)-methyltransferase (234 aa).

Residues G115 and 135–140 (VGDYIL) each bind S-adenosyl-L-methionine.

It belongs to the RNA methyltransferase TrmD family. In terms of assembly, homodimer.

It is found in the cytoplasm. It catalyses the reaction guanosine(37) in tRNA + S-adenosyl-L-methionine = N(1)-methylguanosine(37) in tRNA + S-adenosyl-L-homocysteine + H(+). Functionally, specifically methylates guanosine-37 in various tRNAs. The chain is tRNA (guanine-N(1)-)-methyltransferase from Rickettsia typhi (strain ATCC VR-144 / Wilmington).